Here is a 180-residue protein sequence, read N- to C-terminus: Negative modulator of initiation of replication (180 aa).

Residues 115–119 (RTRVY) are interaction with DNA.

It belongs to the SeqA family. As to quaternary structure, homodimer. Polymerizes to form helical filaments.

The protein localises to the cytoplasm. Its function is as follows. Negative regulator of replication initiation, which contributes to regulation of DNA replication and ensures that replication initiation occurs exactly once per chromosome per cell cycle. Binds to pairs of hemimethylated GATC sequences in the oriC region, thus preventing assembly of replication proteins and re-initiation at newly replicated origins. Repression is relieved when the region becomes fully methylated. The protein is Negative modulator of initiation of replication of Aliivibrio fischeri (strain ATCC 700601 / ES114) (Vibrio fischeri).